Consider the following 430-residue polypeptide: Serine--tRNA ligase (430 aa).

237–239 (TAE) lines the L-serine pocket. Position 268 to 270 (268 to 270 (RSE)) interacts with ATP. Position 291 (E291) interacts with L-serine. 355–358 (EISS) is a binding site for ATP. S391 provides a ligand contact to L-serine.

It belongs to the class-II aminoacyl-tRNA synthetase family. Type-1 seryl-tRNA synthetase subfamily. Homodimer. The tRNA molecule binds across the dimer.

The protein resides in the cytoplasm. The enzyme catalyses tRNA(Ser) + L-serine + ATP = L-seryl-tRNA(Ser) + AMP + diphosphate + H(+). The catalysed reaction is tRNA(Sec) + L-serine + ATP = L-seryl-tRNA(Sec) + AMP + diphosphate + H(+). It functions in the pathway aminoacyl-tRNA biosynthesis; selenocysteinyl-tRNA(Sec) biosynthesis; L-seryl-tRNA(Sec) from L-serine and tRNA(Sec): step 1/1. Catalyzes the attachment of serine to tRNA(Ser). Is also able to aminoacylate tRNA(Sec) with serine, to form the misacylated tRNA L-seryl-tRNA(Sec), which will be further converted into selenocysteinyl-tRNA(Sec). This Salmonella paratyphi C (strain RKS4594) protein is Serine--tRNA ligase.